Consider the following 207-residue polypeptide: LexA repressor (207 aa).

Positions 28-48 form a DNA-binding region, H-T-H motif; sequence RAEIARHLGFKSANAAEEHLK. Residues S124 and K161 each act as for autocatalytic cleavage activity in the active site.

This sequence belongs to the peptidase S24 family. In terms of assembly, homodimer.

The catalysed reaction is Hydrolysis of Ala-|-Gly bond in repressor LexA.. Functionally, represses a number of genes involved in the response to DNA damage (SOS response), including recA and lexA. In the presence of single-stranded DNA, RecA interacts with LexA causing an autocatalytic cleavage which disrupts the DNA-binding part of LexA, leading to derepression of the SOS regulon and eventually DNA repair. The chain is LexA repressor from Pseudoalteromonas atlantica (strain T6c / ATCC BAA-1087).